The primary structure comprises 454 residues: MSHNDTIVAQATPPGRGGVGILRISGLKARDVAQEVLGKLPKPRYADYLPFKDVDGSALDQGIALWFPGPNSFTGEDVLELQGHGGPVILDLLLKRILTLPGVRIARPGEFSERAFLNDKLDLAQAEAIADLIDASSEQAARSALNSLQGAFSARVNHLVEALTHLRIYVEAAIDFPDEEIDFLSDGKIEAQLNGVIADLDAVRTEARQGSLLREGMKVVIAGRPNAGKSSLLNALAGREAAIVTDIAGTTRDVLREHIHIDGMPLHIIDTAGLRDASDEVERIGIERAWQEIEQADRVLFMVDGTTTDAVDPADIWPDFIARLPKNLPITVVRNKADITGETLGISEVNGHSLVRLSARTGEGVDVLRNHLKQSMGFDINMEGGFLARRRHLQALAEAAEHLEQGKAQLLGAWAGELLAEELRLAQQSLSEITGEFTSDDLLGRIFSSFCIGK.

Residues Arg-23, Glu-80, and Lys-120 each contribute to the (6S)-5-formyl-5,6,7,8-tetrahydrofolate site. One can recognise a TrmE-type G domain in the interval 216 to 377; it reads GMKVVIAGRP…LRNHLKQSMG (162 aa). A K(+)-binding site is contributed by Asn-226. Residues 226-231, 245-251, 270-273, 335-338, and 358-360 contribute to the GTP site; these read NAGKSS, TDIAGTT, DTAG, NKAD, and SAR. Ser-230 provides a ligand contact to Mg(2+). The K(+) site is built by Thr-245, Ile-247, and Thr-250. Mg(2+) is bound at residue Thr-251. Lys-454 provides a ligand contact to (6S)-5-formyl-5,6,7,8-tetrahydrofolate.

The protein belongs to the TRAFAC class TrmE-Era-EngA-EngB-Septin-like GTPase superfamily. TrmE GTPase family. In terms of assembly, homodimer. Heterotetramer of two MnmE and two MnmG subunits. K(+) is required as a cofactor.

The protein resides in the cytoplasm. In terms of biological role, exhibits a very high intrinsic GTPase hydrolysis rate. Involved in the addition of a carboxymethylaminomethyl (cmnm) group at the wobble position (U34) of certain tRNAs, forming tRNA-cmnm(5)s(2)U34. In Salmonella paratyphi C (strain RKS4594), this protein is tRNA modification GTPase MnmE.